The sequence spans 142 residues: Small heat shock protein IbpB (142 aa).

The 112-residue stretch at 26-137 folds into the sHSP domain; sequence AGESQSFPPY…APQRIAISER (112 aa).

Belongs to the small heat shock protein (HSP20) family. In terms of assembly, homodimer. Forms homomultimers of about 100-150 subunits at optimal growth temperatures. Conformation changes to oligomers at high temperatures or high ionic concentrations. The decrease in size of the multimers is accompanied by an increase in chaperone activity.

The protein localises to the cytoplasm. In terms of biological role, associates with aggregated proteins, together with IbpA, to stabilize and protect them from irreversible denaturation and extensive proteolysis during heat shock and oxidative stress. Aggregated proteins bound to the IbpAB complex are more efficiently refolded and reactivated by the ATP-dependent chaperone systems ClpB and DnaK/DnaJ/GrpE. Its activity is ATP-independent. In Klebsiella pneumoniae subsp. pneumoniae (strain ATCC 700721 / MGH 78578), this protein is Small heat shock protein IbpB.